Consider the following 399-residue polypeptide: DNA replication and repair protein RecF (399 aa).

An ATP-binding site is contributed by 30–37 (GSNGIGKT).

The protein belongs to the RecF family.

The protein resides in the cytoplasm. The RecF protein is involved in DNA metabolism; it is required for DNA replication and normal SOS inducibility. RecF binds preferentially to single-stranded, linear DNA. It also seems to bind ATP. The polypeptide is DNA replication and repair protein RecF (Paenarthrobacter aurescens (strain TC1)).